The chain runs to 503 residues: Asparagine--tRNA ligase (503 aa).

This sequence belongs to the class-II aminoacyl-tRNA synthetase family. Homodimer.

Its subcellular location is the cytoplasm. It carries out the reaction tRNA(Asn) + L-asparagine + ATP = L-asparaginyl-tRNA(Asn) + AMP + diphosphate + H(+). The protein is Asparagine--tRNA ligase of Aster yellows witches'-broom phytoplasma (strain AYWB).